A 188-amino-acid chain; its full sequence is GTP cyclohydrolase 1 (188 aa).

Residues cysteine 76, histidine 79, and cysteine 148 each contribute to the Zn(2+) site.

It belongs to the GTP cyclohydrolase I family. Homomer.

It carries out the reaction GTP + H2O = 7,8-dihydroneopterin 3'-triphosphate + formate + H(+). Its pathway is cofactor biosynthesis; 7,8-dihydroneopterin triphosphate biosynthesis; 7,8-dihydroneopterin triphosphate from GTP: step 1/1. The protein is GTP cyclohydrolase 1 of Pelotomaculum thermopropionicum (strain DSM 13744 / JCM 10971 / SI).